A 419-amino-acid polypeptide reads, in one-letter code: L-rhamnose isomerase (419 aa).

3 residues coordinate Mn(2+): histidine 262, aspartate 294, and aspartate 296.

It belongs to the rhamnose isomerase family. Homotetramer. The cofactor is Mn(2+).

It is found in the cytoplasm. The enzyme catalyses L-rhamnopyranose = L-rhamnulose. It functions in the pathway carbohydrate degradation; L-rhamnose degradation; glycerone phosphate from L-rhamnose: step 1/3. Its function is as follows. Catalyzes the interconversion of L-rhamnose and L-rhamnulose. The chain is L-rhamnose isomerase from Shigella sonnei (strain Ss046).